A 389-amino-acid polypeptide reads, in one-letter code: MANGANRVDLDGKPIQPLTICMIGAGGFIGSHLCEKLLTETPHKVLALDVYNDKIKHLLEPDTVEWSGRIQFHRINIKHDSRLEGLVKMADLIINLAAICTPADYNTRPLDTIYSNFIDALPVVKYCSENNKRLIHFSTCEVYGKTIGSFLPKDHPLRDDPAFYVLKEDISPCIFGSIEKQRWSYACAKQLIERLVYAEGAENGLEFTIVRPFNWIGPRMDFIPGIDGPSEGVPRVLACFSNNLLRREPLKLVDGGESQRTFVYINDAIEAVLLMIENPERANGHIFNVGNPNNEVTVRQLAEMMTEVYAKVSGEGAIESPTVDVSSKEFYGEGYDDSDKRIPDMTIINRQLGWNPKTSLWDLLESTLTYQHRTYAEAVKKATSKPVAS.

Residues Phe-28, Ile-29, Asp-49, Asn-76, Ile-77, and Leu-96 each coordinate NAD(+). Positions 105, 139, 141, 182, and 185 each coordinate UDP-alpha-D-glucuronate. NAD(+) is bound by residues Tyr-185 and Lys-189. Tyr-185 serves as the catalytic Proton acceptor. Asn-214 lines the UDP-alpha-D-glucuronate pocket. Trp-215 and Arg-235 together coordinate NAD(+). Residues Lys-251, Val-253, Arg-260, Tyr-331, Tyr-335, Asp-337, and Arg-341 each coordinate UDP-alpha-D-glucuronate.

Belongs to the NAD(P)-dependent epimerase/dehydratase family. Homodimer and heterodimer with AXS2. The cofactor is NAD(+). Widely expressed with stronger expression in leaves and stems, and lower levels in flowers, siliques, pistils, pollen and roots.

Its subcellular location is the cytoplasm. The catalysed reaction is UDP-alpha-D-glucuronate + H(+) = UDP-alpha-D-xylose + CO2. It catalyses the reaction UDP-alpha-D-glucuronate + H(+) = UDP-alpha-D-apiose + CO2. Inhibited by UDP-D-galacturonate. Functionally, together with AXS2, catalyzes the conversion of UDP-D-glucuronate into a mixture of UDP-D-apiose (UDP-Api) as the main product and UDP-D-xylose to a lesser extent, via a cycle of oxidation and reduction. D-Apiose (3-C-hydroxymethyl-d-erythrose) is the only plant cell wall monosaccharide with a branched carbon skeleton and is found in rhamnogalacturonan II (RG-II), apiogalacturonan, and several apioglycosides. The protein is UDP-D-apiose/UDP-D-xylose synthase 1 of Arabidopsis thaliana (Mouse-ear cress).